The following is a 195-amino-acid chain: uncharacterized protein (195 aa).

This is an uncharacterized protein from Bacillus subtilis (strain 168).